We begin with the raw amino-acid sequence, 378 residues long: Probable protein phosphatase 2C 55 (378 aa).

2 disordered regions span residues 1-59 and 79-115; these read MRRH…ASKG and EGEA…GVGC. Residues 7 to 26 show a composition bias toward low complexity; that stretch reads LGLLRRAAASSTSAASSRAG. The segment covering 92 to 104 has biased composition (basic residues); it reads GGRRGRNSKRQPP. Residues 122–369 form the PPM-type phosphatase domain; the sequence is SWGYSSFQGR…DNVTCIVLQF (248 aa). Residues D158, G159, D321, and D360 each coordinate Mn(2+).

It belongs to the PP2C family. Requires Mg(2+) as cofactor. Mn(2+) serves as cofactor.

The enzyme catalyses O-phospho-L-seryl-[protein] + H2O = L-seryl-[protein] + phosphate. It carries out the reaction O-phospho-L-threonyl-[protein] + H2O = L-threonyl-[protein] + phosphate. In Oryza sativa subsp. japonica (Rice), this protein is Probable protein phosphatase 2C 55.